The following is a 445-amino-acid chain: C4-dicarboxylate transport protein (445 aa).

8 consecutive transmembrane segments (helical) span residues 24-44 (VLYV…WVSP), 62-82 (LIKM…IAHI), 105-125 (FALI…GLAA), 163-183 (GDIL…MALG), 201-221 (FGVI…AMAF), 237-257 (LVAL…GLIA), 322-342 (IYMT…LTFT), and 370-390 (AGTL…VFSI).

It belongs to the dicarboxylate/amino acid:cation symporter (DAACS) (TC 2.A.23) family.

It is found in the cell inner membrane. In terms of biological role, responsible for the transport of dicarboxylates such as succinate, fumarate, and malate from the periplasm across the membrane. This is C4-dicarboxylate transport protein from Rhodopseudomonas palustris (strain BisB5).